A 162-amino-acid polypeptide reads, in one-letter code: Lipid droplet assembly factor 1-A (162 aa).

Over 1–42 the chain is Cytoplasmic; that stretch reads MASAENLYQEKMQELQKQMNKVMQTINNHSKVEAFLNSPFGQ. Residues 43–63 traverse the membrane as a helical segment; it reads YLDQHPFVTLSLLVFISLSAV. At 64–65 the chain is on the lumenal side; it reads PV. Residues 66 to 86 form a helical membrane-spanning segment; sequence GIFLTLIAGTAIAVCLAVLII. Residue Glu-87 is a topological domain, cytoplasmic. A helical membrane pass occupies residues 88–108; sequence GIVISVGGIALLCILCGLAVM. Residue Ser-109 is a topological domain, lumenal. Residues 110–130 form a helical membrane-spanning segment; it reads LGVAAVLCVSYVAGSSVLNYI. The Cytoplasmic portion of the chain corresponds to 131–162; that stretch reads HAYRVTVGTRGRSGPISLNHETTTAEKSYRSS.

It belongs to the LDAF1 family.

The protein localises to the endoplasmic reticulum membrane. It is found in the lipid droplet. Plays an important role in the formation of lipid droplets (LD) which are storage organelles at the center of lipid and energy homeostasis. The chain is Lipid droplet assembly factor 1-A from Xenopus laevis (African clawed frog).